We begin with the raw amino-acid sequence, 575 residues long: Arginine--tRNA ligase (575 aa).

The short motif at 131–141 is the 'HIGH' region element; that stretch reads ANPNGPLHIGH.

It belongs to the class-I aminoacyl-tRNA synthetase family.

It is found in the cytoplasm. It catalyses the reaction tRNA(Arg) + L-arginine + ATP = L-arginyl-tRNA(Arg) + AMP + diphosphate. The sequence is that of Arginine--tRNA ligase from Methanobrevibacter smithii (strain ATCC 35061 / DSM 861 / OCM 144 / PS).